Consider the following 242-residue polypeptide: Carboxy-S-adenosyl-L-methionine synthase (242 aa).

Residues tyrosine 39, 64–66 (GCS), 89–90 (DN), 117–118 (DI), asparagine 132, and arginine 199 each bind S-adenosyl-L-methionine.

This sequence belongs to the class I-like SAM-binding methyltransferase superfamily. Cx-SAM synthase family. As to quaternary structure, homodimer.

The enzyme catalyses prephenate + S-adenosyl-L-methionine = carboxy-S-adenosyl-L-methionine + 3-phenylpyruvate + H2O. Functionally, catalyzes the conversion of S-adenosyl-L-methionine (SAM) to carboxy-S-adenosyl-L-methionine (Cx-SAM). The protein is Carboxy-S-adenosyl-L-methionine synthase of Vibrio atlanticus (strain LGP32) (Vibrio splendidus (strain Mel32)).